The sequence spans 882 residues: Translation initiation factor IF-2 (882 aa).

3 stretches are compositionally biased toward polar residues: residues 38–56, 97–124, and 140–192; these read NDSNSFVDLHNNSNKAEYS, GGYSQNRDNRTGGYSQNRDNRTGGYSQN, and GGYS…NRDS. Disordered stretches follow at residues 38–192 and 236–274; these read NDSN…NRDS and STPAADSENSKELNRKLGEKKKQQQESQKSYKRKKAETE. Residues 243–259 are compositionally biased toward basic and acidic residues; it reads ENSKELNRKLGEKKKQQ. The 174-residue stretch at 380–553 folds into the tr-type G domain; that stretch reads EKPPVITIMG…DMMLLKANPS (174 aa). Positions 389 to 396 are G1; that stretch reads GHVDHGKT. 389–396 provides a ligand contact to GTP; sequence GHVDHGKT. Residues 414–418 are G2; that stretch reads GITQH. The tract at residues 435-438 is G3; it reads DTPG. GTP is bound by residues 435–439 and 489–492; these read DTPGH and NKID. Residues 489 to 492 form a G4 region; that stretch reads NKID. Residues 525-527 are G5; the sequence is SAL.

Belongs to the TRAFAC class translation factor GTPase superfamily. Classic translation factor GTPase family. IF-2 subfamily.

The protein resides in the cytoplasm. In terms of biological role, one of the essential components for the initiation of protein synthesis. Protects formylmethionyl-tRNA from spontaneous hydrolysis and promotes its binding to the 30S ribosomal subunits. Also involved in the hydrolysis of GTP during the formation of the 70S ribosomal complex. This Borreliella burgdorferi (strain ATCC 35210 / DSM 4680 / CIP 102532 / B31) (Borrelia burgdorferi) protein is Translation initiation factor IF-2 (infB).